Here is a 92-residue protein sequence, read N- to C-terminus: Small ribosomal subunit protein uS19 (92 aa).

It belongs to the universal ribosomal protein uS19 family.

Protein S19 forms a complex with S13 that binds strongly to the 16S ribosomal RNA. This is Small ribosomal subunit protein uS19 from Malacoplasma penetrans (strain HF-2) (Mycoplasma penetrans).